We begin with the raw amino-acid sequence, 478 residues long: Cell division protein FtsZ homolog 2-1, chloroplastic (478 aa).

Residues 86–112 form a disordered region; the sequence is EGTSTIVNPRKETSSGPVVEDFEEPSA. 128–132 is a GTP binding site; that stretch reads GGGSN. Phosphoserine; by PGK1 is present on Ser143. Residues 217-219, Glu248, and Arg252 each bind GTP; that span reads GTG. Phosphothreonine; by PGK1 is present on Thr286. Asp296 is a GTP binding site.

The protein belongs to the FtsZ family. In terms of assembly, aggregates to form a contractile ring-like structure; contraction of the ring was accompanied by an increase in the filament turnover rate. Self-interacts and binds to FTSZ1 in heteromers to form two morphologically distinct types of filaments, termed type-I (smooth filaments) and -II (rough filaments), in a GTP-dependent manner; the GDP-induced disassembly is inhibited by ARC6. Interacts (via C-terminus) with ARC6; this interaction enables ARC3 binding to FTSZ2. Part of a complex made of ARC3, ARC6, FTSZ1 and FTSZ2. Binds to MCD1 in an ARC6-dependent manner. Binds to CDP1/PARC6. Part of a complex made of CDP1/PARC6, ARC3 and FtsZ proteins in the middle of the plastid; this complex enhances the dynamics of Z rings during chloroplast division. Binds to PGK1. Post-translationally, filaments containing FTSZ2-1 are stabilized when in complex with GTP but destabilized after conversion of GTP into GDP; ARC6 conteracts this destabilisation by preventing the dissociation of GDP-bound FTSZ2 molecules thus inhibiting filament disassembly whereas ARC3 promotes GTPase activity thus accelerating the conversion of GTP into GDP and triggering FtsZ2 filaments disassembly. Phosphorylation at Ser-143 is necessary for interactions with ARC3, ARC6, FTSZ1 and FTSZ2-2. Phosphorylations at Ser-143 and Thr-286 are required for the formation of contractile ring at the chloroplast midpoint.

The protein localises to the plastid. The protein resides in the chloroplast stroma. It is found in the chloroplast thylakoid membrane. Its activity is regulated as follows. GTPase activity is enhanced by ARC3. In terms of biological role, exhibits GTPase activity which converts GTP ligands to GDP. Component of the plastid division machinery consisting in a binary fission accomplished by the simultaneous constriction of the FtsZ ring on the stromal side of the inner envelope membrane, and the ARC5 ring on the cytosolic side of the outer envelope membrane. Required for plastid division in a dose-dependent manner. In the vegetative shoot apex, at the shoot apical meristem (SAM), where the proplastid-to-chloroplast transition takes place, major contributor of plastid division in the L1 and L3 layers and contributes equally with FTSZ1 in the L2 layer. The sequence is that of Cell division protein FtsZ homolog 2-1, chloroplastic from Arabidopsis thaliana (Mouse-ear cress).